Reading from the N-terminus, the 150-residue chain is MEKKIAVTAGTFDLLHPGHFNTLNFAKKHADELVVIIARDETVKKIKGRSPVIPEEQRKIMIEALKPVDRAVLGSLTNKLEPILEIRPDVIVLGPDQTTYQINELKAQLAEHSLYPEILKVEDYVKCPFHSSYDILKEIVRRWCCKELKV.

ATP contacts are provided by residues 11 to 12 (TF), 16 to 19 (HPGH), aspartate 96, and tyrosine 124.

It belongs to the archaeal FAD synthase family. Homodimer. The cofactor is a divalent metal cation.

It catalyses the reaction FMN + ATP + H(+) = FAD + diphosphate. The protein operates within cofactor biosynthesis; FAD biosynthesis; FAD from FMN: step 1/1. Its function is as follows. Catalyzes the transfer of the AMP portion of ATP to flavin mononucleotide (FMN) to produce flavin adenine dinucleotide (FAD) coenzyme. The chain is FAD synthase from Methanococcus maripaludis (strain DSM 14266 / JCM 13030 / NBRC 101832 / S2 / LL).